The following is a 61-amino-acid chain: Large ribosomal subunit protein eL37 (61 aa).

Zn(2+) contacts are provided by C20, C23, C35, and C38. Residues 20-38 (CRRCGRRAYHVRKKRCAAC) form a C4-type zinc finger.

The protein belongs to the eukaryotic ribosomal protein eL37 family. Requires Zn(2+) as cofactor.

Functionally, binds to the 23S rRNA. In Methanocaldococcus jannaschii (strain ATCC 43067 / DSM 2661 / JAL-1 / JCM 10045 / NBRC 100440) (Methanococcus jannaschii), this protein is Large ribosomal subunit protein eL37 (rpl37e).